Reading from the N-terminus, the 301-residue chain is Probable alpha-L-glutamate ligase 1 (301 aa).

In terms of domain architecture, ATP-grasp spans 104–287 (MQLMSRRGIG…VAGAIIEFVE (184 aa)). Residues Lys141, 178-179 (EY), Asp187, and 211-213 (RSN) contribute to the ATP site. 3 residues coordinate Mg(2+): Asp248, Glu260, and Asn262. Mn(2+) contacts are provided by Asp248, Glu260, and Asn262.

It belongs to the RimK family. Mg(2+) is required as a cofactor. Mn(2+) serves as cofactor.

In Shewanella putrefaciens (strain CN-32 / ATCC BAA-453), this protein is Probable alpha-L-glutamate ligase 1.